We begin with the raw amino-acid sequence, 476 residues long: Probable pectin lyase F (476 aa).

A signal peptide spans 1-20 (MTLLRHLLTATALLGASVQA). A disulfide bridge links cysteine 84 with cysteine 108. N-linked (GlcNAc...) asparagine glycosylation is found at asparagine 103 and asparagine 131. Arginine 258 is a catalytic residue. N-linked (GlcNAc...) asparagine glycosylation is found at asparagine 277 and asparagine 318. A disulfide bond links cysteine 325 and cysteine 333. Asparagine 385 is a glycosylation site (N-linked (GlcNAc...) asparagine). The segment at 412–476 (FVPAYSEAGP…HHHQGHGRGY (65 aa)) is disordered. Residues 426–453 (VPTQPSWSWRTVTNGPAPTGAPSDSPSA) show a composition bias toward polar residues. A compositionally biased stretch (basic residues) spans 465–476 (NKHHHQGHGRGY).

Belongs to the polysaccharide lyase 1 family.

It localises to the secreted. The catalysed reaction is Eliminative cleavage of (1-&gt;4)-alpha-D-galacturonan methyl ester to give oligosaccharides with 4-deoxy-6-O-methyl-alpha-D-galact-4-enuronosyl groups at their non-reducing ends.. In terms of biological role, pectinolytic enzymes consist of four classes of enzymes: pectin lyase, polygalacturonase, pectin methylesterase and rhamnogalacturonase. Among pectinolytic enzymes, pectin lyase is the most important in depolymerization of pectin, since it cleaves internal glycosidic bonds of highly methylated pectins. In Aspergillus niger (strain ATCC MYA-4892 / CBS 513.88 / FGSC A1513), this protein is Probable pectin lyase F (pelF).